We begin with the raw amino-acid sequence, 364 residues long: Autophagy-related protein 5 (364 aa).

Residues 1 to 13 (MASPNPYSYSPQL) show a composition bias toward polar residues. The segment at 1-103 (MASPNPYSYS…SLPPKPKPSS (103 aa)) is disordered. Low complexity predominate over residues 28-42 (SSPSFRSTPFRSSRG). Over residues 43 to 53 (TGAGTGIGLGL) the composition is skewed to gly residues. Residues 72 to 82 (RSGDGSHDDLP) are compositionally biased toward basic and acidic residues. K202 is covalently cross-linked (Glycyl lysine isopeptide (Lys-Gly) (interchain with G-Cter in ATG12)). The tract at residues 262 to 306 (PSSPSPPSSDQQQPQRPGGSSSSGSYRVMQTLVPPRGPNNRTPQT) is disordered. A compositionally biased stretch (low complexity) spans 269 to 286 (SSDQQQPQRPGGSSSSGS).

It belongs to the ATG5 family. As to quaternary structure, conjugated with atg12. Conjugated to atg12; which is essential for autophagy.

It localises to the preautophagosomal structure membrane. Functionally, involved in cytoplasm to vacuole transport (Cvt) and autophagic vesicle formation. Autophagy is essential for maintenance of amino acid levels and protein synthesis under nitrogen starvation. Required for selective autophagic degradation of the nucleus (nucleophagy). Also required for mitophagy, which eliminates defective or superfluous mitochondria in order to fulfill cellular energy requirements and prevent excess ROS production. Conjugation with atg12, through a ubiquitin-like conjugating system involving apg-5/atg7 as an E1-like activating enzyme and atg10 as an E2-like conjugating enzyme, is essential for its function. The atg12-apg-4/atg5 conjugate acts as an E3-like enzyme which is required for lipidation of apg-6/atg8 and apg-6/atg8 association to the vesicle membranes. This Neurospora crassa (strain ATCC 24698 / 74-OR23-1A / CBS 708.71 / DSM 1257 / FGSC 987) protein is Autophagy-related protein 5 (apg-4).